We begin with the raw amino-acid sequence, 825 residues long: Glycerol-3-phosphate acyltransferase 1, mitochondrial (825 aa).

At 1–87 (MDESALTLGT…FFNPSIPSLG (87 aa)) the chain is on the cytoplasmic side. The important for mitochondrial localization stretch occupies residues 80–120 (NPSIPSLGLRNVIYINETHTRHRGWLARRLSYVLFIQERDV). The stretch at 88 to 118 (LRNVIYINETHTRHRGWLARRLSYVLFIQER) is an intramembrane region. Topologically, residues 119–825 (DVHKGMFATN…LEYILSLVVL (707 aa)) are cytoplasmic. An HXXXXD motif motif is present at residues 230-235 (HRSHID). 5 residues coordinate CoA: Arg278, Arg279, Lys288, Arg293, and Arg328. Position 380 is a phosphoserine (Ser380). The tract at residues 435–455 (SRPSGAADEGTDMSINESRNA) is disordered. Arg461 serves as a coordination point for CoA. 2 positions are modified to phosphoserine: Ser685 and Ser692. An N6-acetyllysine mark is found at Lys777 and Lys781.

It belongs to the GPAT/DAPAT family. In terms of tissue distribution, highly expressed in adipose tissues and lung. Low expression in liver.

The protein localises to the mitochondrion outer membrane. It carries out the reaction sn-glycerol 3-phosphate + an acyl-CoA = a 1-acyl-sn-glycero-3-phosphate + CoA. The catalysed reaction is (9Z,12Z)-octadecadienoyl-CoA + sn-glycerol 3-phosphate = 1-(9Z,12Z)-octadecadienoyl-sn-glycero-3-phosphate + CoA. It catalyses the reaction sn-glycerol 3-phosphate + (9Z)-octadecenoyl-CoA = 1-(9Z-octadecenoyl)-sn-glycero-3-phosphate + CoA. The enzyme catalyses sn-glycerol 3-phosphate + octadecanoyl-CoA = 1-octadecanoyl-sn-glycero-3-phosphate + CoA. It carries out the reaction sn-glycerol 3-phosphate + hexadecanoyl-CoA = 1-hexadecanoyl-sn-glycero-3-phosphate + CoA. The catalysed reaction is dodecanoyl-CoA + sn-glycerol 3-phosphate = 1-dodecanoyl-sn-glycerol 3-phosphate + CoA. It catalyses the reaction 1-acyl-sn-glycero-3-phospho-(1'-sn-glycerol) + an acyl-CoA = a 1,2-diacyl-sn-glycero-3-phospho-(1'-sn-glycerol) + CoA. It participates in phospholipid metabolism; CDP-diacylglycerol biosynthesis; CDP-diacylglycerol from sn-glycerol 3-phosphate: step 1/3. Mitochondrial membrane protein that catalyzes the essential first step of biosynthesis of glycerolipids such as triglycerides, phosphatidic acids and lysophosphatidic acids. Esterifies acyl-group from acyl-coenzyme A (acyl-CoA) to the sn-1 position of glycerol-3-phosphate, to produce lysophosphatidic acid. Has a narrow hydrophobic binding cleft that selects for a linear acyl chain. Catalytic activity is higher for substrates with a 16-carbon acyl chain. The protein is Glycerol-3-phosphate acyltransferase 1, mitochondrial of Bos taurus (Bovine).